A 108-amino-acid chain; its full sequence is MMRGGMGNMQKMLKQMQKMQKEMQKAQEELAEKTVEGTAGGGMVTVVANGHKQILEVKIKEEVVDPDDIEMLQDLILAATNDALKKADELANEMMGQFTKGLNIPGLF.

The segment at 1 to 32 (MMRGGMGNMQKMLKQMQKMQKEMQKAQEELAE) is disordered. Low complexity predominate over residues 9–18 (MQKMLKQMQK). The span at 19–32 (MQKEMQKAQEELAE) shows a compositional bias: basic and acidic residues.

This sequence belongs to the YbaB/EbfC family. In terms of assembly, homodimer.

The protein localises to the cytoplasm. It localises to the nucleoid. Functionally, binds to DNA and alters its conformation. May be involved in regulation of gene expression, nucleoid organization and DNA protection. The protein is Nucleoid-associated protein GK0018 of Geobacillus kaustophilus (strain HTA426).